Reading from the N-terminus, the 507-residue chain is Desmethyl-deoxy-podophyllotoxin synthase (507 aa).

A helical transmembrane segment spans residues 1–21 (MEFLSFPLSSALLIILLFMLV). C440 contacts heme.

Belongs to the cytochrome P450 family. Heme serves as cofactor. In terms of tissue distribution, rhizome-specific expression.

The protein localises to the membrane. The enzyme catalyses (-)-deoxypodophyllotoxin + reduced [NADPH--hemoprotein reductase] + O2 = (-)-4'-desmethyl-deoxypodophyllotoxin + formaldehyde + oxidized [NADPH--hemoprotein reductase] + H2O + H(+). It functions in the pathway aromatic compound metabolism; phenylpropanoid biosynthesis. Its function is as follows. Cytochrome P450 involved in the biosynthesis of etoposide, a chemotherapeutic compound of the topoisomerase inhibitor family. Catalyzes the conversion of deoxypodophyllotoxin to desmethyl-deoxypodophyllotoxin. The chain is Desmethyl-deoxy-podophyllotoxin synthase from Sinopodophyllum hexandrum (Himalayan may apple).